The following is a 676-amino-acid chain: MTLEEARKRVNELRDLIRYHNYRYYVLADPEISDAEYDRLLRELKELEERFPELKSPDSPTLQVGARPLEATFRPVRHPTRMYSLDNAFNLDELKAFEERIERALGRKGPFAYTVEHKVDGLSVNLYYEEGVLVYGATRGDGEVGEEVTQNLLTIPTIPRRLKGVPERLEVRGEVYMPIEAFLRLNEELEERGERIFKNPRNAAAGSLRQKDPRITAKRGLRATFYALGLGLEEVEREGVATQFALLHWLKEKGFPVEHGYARAVGAEGVEAVYQDWLKKRRALPFEADGVVVKLDELALWRELGYTARAPRFAIAYKFPAEEKETRLLDVVFQVGRTGRVTPVGILEPVFLEGSEVSRVTLHNESYIEELDIRIGDWVLVHKAGGVIPEVLRVLKERRTGEERPIRWPETCPECGHRLLKEGKVHRCPNPLCPAKRFEAIRHFASRKAMDIQGLGEKLIERLLEKGLVKDVADLYRLRKEDLVGLERMGEKSAQNLLRQIEESKKRGLERLLYALGLPGVGEVLARNLAARFGNMDRLLEASLEELLEVEEVGELTARAILETLKDPAFRDLVRRLKEAGVEMEAKEKGGEALKGLTFVITGELSRPREEVKALLRRLGAKVTDSVSRKTSYLVVGENPGSKLEKARALGVPTLTEEELYRLLEARTGKKAEELV.

Residues 34-38, 84-85, and glutamate 116 each bind NAD(+); these read DAEYD and SL. Residue lysine 118 is the N6-AMP-lysine intermediate of the active site. Residues arginine 139, glutamate 174, lysine 294, and lysine 318 each contribute to the NAD(+) site. Residues cysteine 412, cysteine 415, cysteine 428, and cysteine 433 each contribute to the Zn(2+) site. One can recognise a BRCT domain in the interval 589–676; that stretch reads KGGEALKGLT…RTGKKAEELV (88 aa).

This sequence belongs to the NAD-dependent DNA ligase family. LigA subfamily. Mg(2+) is required as a cofactor. Mn(2+) serves as cofactor.

The enzyme catalyses NAD(+) + (deoxyribonucleotide)n-3'-hydroxyl + 5'-phospho-(deoxyribonucleotide)m = (deoxyribonucleotide)n+m + AMP + beta-nicotinamide D-nucleotide.. Functionally, DNA ligase that catalyzes the formation of phosphodiester linkages between 5'-phosphoryl and 3'-hydroxyl groups in double-stranded DNA using NAD as a coenzyme and as the energy source for the reaction. It is essential for DNA replication and repair of damaged DNA. The polypeptide is DNA ligase (Thermus thermophilus (strain ATCC 27634 / DSM 579 / HB8)).